The following is a 334-amino-acid chain: MKEKIAYLGMGIWGFCLASLLANKGYRVVGWARNPDLIAQLQIEKRHPQAPDIPLHPNLSFTTDMEEAVNEASMIVEGVSSAGIRPVSEQLKAITDLKVPFVITSKGIEQHTGLLLSEIVVEIFGNNASQYLGYLSGPSIAREVLKGCPCSVVISAYNPDTLKKIHNAFLTPTFRVYPNSDLKGVALGGALKNIIAIACGISDGFHFGDNAKSGLVTRGLHEIRKFATIMDCRPDTLNGLAGLGDLCTTCFSSLSRNTKFGKLIAQGLTLEQAKAEIGMVVEGAYTALSAYQIAKHHKIDMPITTGIYRVLYENLDIKEGIAALLQRNTKEEYL.

3 residues coordinate NADPH: Trp-13, Arg-33, and Lys-106. 3 residues coordinate sn-glycerol 3-phosphate: Lys-106, Gly-137, and Ser-139. An NADPH-binding site is contributed by Ala-141. Sn-glycerol 3-phosphate-binding residues include Lys-192, Asp-245, Ser-255, Arg-256, and Asn-257. Catalysis depends on Lys-192, which acts as the Proton acceptor. Arg-256 contributes to the NADPH binding site. Positions 280 and 282 each coordinate NADPH.

It belongs to the NAD-dependent glycerol-3-phosphate dehydrogenase family.

It localises to the cytoplasm. The catalysed reaction is sn-glycerol 3-phosphate + NAD(+) = dihydroxyacetone phosphate + NADH + H(+). It carries out the reaction sn-glycerol 3-phosphate + NADP(+) = dihydroxyacetone phosphate + NADPH + H(+). The protein operates within membrane lipid metabolism; glycerophospholipid metabolism. In terms of biological role, catalyzes the reduction of the glycolytic intermediate dihydroxyacetone phosphate (DHAP) to sn-glycerol 3-phosphate (G3P), the key precursor for phospholipid synthesis. The polypeptide is Glycerol-3-phosphate dehydrogenase [NAD(P)+] (Chlamydia felis (strain Fe/C-56) (Chlamydophila felis)).